The chain runs to 272 residues: NH(3)-dependent NAD(+) synthetase (272 aa).

45–52 contributes to the ATP binding site; it reads GISGGQDS. Mg(2+) is bound at residue D51. R138 serves as a coordination point for deamido-NAD(+). T158 serves as a coordination point for ATP. E163 contacts Mg(2+). K171 and D178 together coordinate deamido-NAD(+). ATP contacts are provided by K187 and T209. 258-259 is a deamido-NAD(+) binding site; that stretch reads HK.

Belongs to the NAD synthetase family. Homodimer.

The catalysed reaction is deamido-NAD(+) + NH4(+) + ATP = AMP + diphosphate + NAD(+) + H(+). It participates in cofactor biosynthesis; NAD(+) biosynthesis; NAD(+) from deamido-NAD(+) (ammonia route): step 1/1. Catalyzes the ATP-dependent amidation of deamido-NAD to form NAD. Uses ammonia as a nitrogen source. The polypeptide is NH(3)-dependent NAD(+) synthetase (Bacillus cereus (strain G9842)).